The sequence spans 1226 residues: Methionine synthase (1226 aa).

The Hcy-binding domain occupies 6 to 326 (RQQIEAQLKQ…EHIRQMAQAV (321 aa)). Residues Cys-248, Cys-311, and Cys-312 each contribute to the Zn(2+) site. The region spanning 357–618 (FINVGERTNV…VPEKLREAVE (262 aa)) is the Pterin-binding domain. Positions 651 to 745 (SALEWRTWPV…FINAEKQSGS (95 aa)) constitute a B12-binding N-terminal domain. Methylcob(III)alamin is bound by residues Glu-695, 757–761 (GDVHD), His-760, Ser-805, Thr-809, and Ala-861. The 136-residue stretch at 747 to 882 (NGKILLATVK…SDERRPAFIE (136 aa)) folds into the B12-binding domain. An AdoMet activation domain is found at 898–1226 (KKPRTKPVTL…EKWLGPNING (329 aa)). Residues Asp-948, Arg-1136, and 1191–1192 (YF) contribute to the S-adenosyl-L-methionine site.

It belongs to the vitamin-B12 dependent methionine synthase family. Requires methylcob(III)alamin as cofactor. Zn(2+) is required as a cofactor.

The enzyme catalyses (6S)-5-methyl-5,6,7,8-tetrahydrofolate + L-homocysteine = (6S)-5,6,7,8-tetrahydrofolate + L-methionine. It participates in amino-acid biosynthesis; L-methionine biosynthesis via de novo pathway; L-methionine from L-homocysteine (MetH route): step 1/1. Catalyzes the transfer of a methyl group from methyl-cobalamin to homocysteine, yielding enzyme-bound cob(I)alamin and methionine. Subsequently, remethylates the cofactor using methyltetrahydrofolate. The sequence is that of Methionine synthase (metH) from Vibrio parahaemolyticus serotype O3:K6 (strain RIMD 2210633).